The primary structure comprises 530 residues: Potassium voltage-gated channel subfamily A member 6 (530 aa).

Residues 1–35 (MRSEKSLTLAAPGEVRGPEGEQQDAGEFQEAEGGG) form a disordered region. Ser3 carries the phosphoserine modification. Positions 21 to 30 (EQQDAGEFQE) are enriched in acidic residues. Residues 172–193 (PARGIAIVSVLVILISIVIFCL) traverse the membrane as a helical segment. Positions 203 to 239 (GRGGSNEGSGTRMSPASRGSHEEEDEDEDSYAFPGSI) are disordered. Ser222 bears the Phosphoserine; by CK2 mark. The chain crosses the membrane as a helical span at residues 264–285 (FFLVETLCIVWFTFELLVRFSA). Cys286 carries S-palmitoyl cysteine lipidation. A helical membrane pass occupies residues 297–317 (MNIIDLVAIFPYFITLGTELV). A helical; Voltage-sensor transmembrane segment spans residues 339–359 (LAILRVIRLVRVFRIFKLSRH). Residues 361 to 374 (KGLQILGKTLQASM) are S4-S5 linker. Residues 375-396 (RELGLLIFFLFIGVILFSSAVY) traverse the membrane as a helical segment. Residues 411 to 422 (PDAFWWAVVTMT) constitute an intramembrane region (helical). The short motif at 423 to 428 (TVGYGD) is the Selectivity filter element. Residues 423-430 (TVGYGDMY) lie within the membrane without spanning it. Residues 438-466 (IVGSLCAIAGVLTIALPVPVIVSNFNYFY) form a helical membrane-spanning segment. At Ser512 the chain carries Phosphoserine; by PKA. Positions 527–529 (LTE) match the PDZ-binding motif. Thr528 is subject to Phosphothreonine; by PKA.

It belongs to the potassium channel family. A (Shaker) (TC 1.A.1.2) subfamily. Kv1.6/KCNA6 sub-subfamily. As to quaternary structure, homotetramer and heterotetramer of potassium channel proteins. Interacts with KCNAB1 and KCNAB2.

It localises to the cell membrane. It catalyses the reaction K(+)(in) = K(+)(out). Its function is as follows. Voltage-gated potassium channel that mediates transmembrane potassium transport in excitable membranes. Forms tetrameric potassium-selective channels through which potassium ions pass in accordance with their electrochemical gradient. The channel alternates between opened and closed conformations in response to the voltage difference across the membrane. Can form functional homotetrameric channels and heterotetrameric channels that contain variable proportions of KCNA1, KCNA2, KCNA4, KNCA5, KCNA6, and possibly other family members as well; channel properties depend on the type of alpha subunits that are part of the channel. Channel properties are modulated by cytoplasmic beta subunits that regulate the subcellular location of the alpha subunits and promote rapid inactivation. Homotetrameric channels display rapid activation and slow inactivation. In Rattus norvegicus (Rat), this protein is Potassium voltage-gated channel subfamily A member 6 (Kcna6).